A 394-amino-acid chain; its full sequence is Carbamoyltransferase HypF homolog (394 aa).

The protein belongs to the carbamoyltransferase HypF family.

The protein is Carbamoyltransferase HypF homolog (hypF1) of Cupriavidus necator (strain ATCC 17699 / DSM 428 / KCTC 22496 / NCIMB 10442 / H16 / Stanier 337) (Ralstonia eutropha).